The sequence spans 186 residues: NADH-ubiquinone oxidoreductase 17.8 kDa subunit, mitochondrial (186 aa).

A mitochondrion-targeting transit peptide spans 1-26 (MSSFRLGVSRVARQVRAPCVRNTRRY). The interval 22-49 (NTRRYASDSHAPADHTHSAAGHGEHHHA) is disordered. Over residues 26–49 (YASDSHAPADHTHSAAGHGEHHHA) the composition is skewed to basic and acidic residues. Residues 58 to 78 (LGTAFYVIFGAIPAFGALYYF) form a helical membrane-spanning segment.

In terms of assembly, complex I is composed of about 40 different subunits.

It localises to the mitochondrion inner membrane. The enzyme catalyses a ubiquinone + NADH + 5 H(+)(in) = a ubiquinol + NAD(+) + 4 H(+)(out). Transfer of electrons from NADH to the respiratory chain. The immediate electron acceptor for the enzyme is believed to be ubiquinone. The protein is NADH-ubiquinone oxidoreductase 17.8 kDa subunit, mitochondrial (nuo17.8) of Neurospora crassa (strain ATCC 24698 / 74-OR23-1A / CBS 708.71 / DSM 1257 / FGSC 987).